Reading from the N-terminus, the 118-residue chain is Aspartate 1-decarboxylase (118 aa).

Ser-25 (schiff-base intermediate with substrate; via pyruvic acid) is an active-site residue. Position 25 is a pyruvic acid (Ser) (Ser-25). Substrate is bound at residue Thr-57. Tyr-58 serves as the catalytic Proton donor. 73–75 serves as a coordination point for substrate; sequence GAA.

Belongs to the PanD family. In terms of assembly, heterooctamer of four alpha and four beta subunits. The cofactor is pyruvate. Post-translationally, is synthesized initially as an inactive proenzyme, which is activated by self-cleavage at a specific serine bond to produce a beta-subunit with a hydroxyl group at its C-terminus and an alpha-subunit with a pyruvoyl group at its N-terminus.

Its subcellular location is the cytoplasm. It catalyses the reaction L-aspartate + H(+) = beta-alanine + CO2. It participates in cofactor biosynthesis; (R)-pantothenate biosynthesis; beta-alanine from L-aspartate: step 1/1. Catalyzes the pyruvoyl-dependent decarboxylation of aspartate to produce beta-alanine. The sequence is that of Aspartate 1-decarboxylase from Caulobacter vibrioides (strain ATCC 19089 / CIP 103742 / CB 15) (Caulobacter crescentus).